A 352-amino-acid polypeptide reads, in one-letter code: Phenylalanine--tRNA ligase alpha subunit (352 aa).

Mg(2+) is bound at residue Glu258.

The protein belongs to the class-II aminoacyl-tRNA synthetase family. Phe-tRNA synthetase alpha subunit type 1 subfamily. Tetramer of two alpha and two beta subunits. Requires Mg(2+) as cofactor.

The protein localises to the cytoplasm. The enzyme catalyses tRNA(Phe) + L-phenylalanine + ATP = L-phenylalanyl-tRNA(Phe) + AMP + diphosphate + H(+). This Staphylococcus saprophyticus subsp. saprophyticus (strain ATCC 15305 / DSM 20229 / NCIMB 8711 / NCTC 7292 / S-41) protein is Phenylalanine--tRNA ligase alpha subunit.